Reading from the N-terminus, the 302-residue chain is Beta-lactamase (302 aa).

The segment covering 1–11 (MADRRRVHAWA) has biased composition (basic residues). The first 29 residues, 1-29 (MADRRRVHAWARARPAAPEPAPPTPSAAA), serve as a signal peptide directing secretion. The interval 1–43 (MADRRRVHAWARARPAAPEPAPPTPSAAAPSVAPGPAATPPDP) is disordered. Positions 26-36 (SAAAPSVAPGP) are enriched in low complexity. The active-site Acyl-ester intermediate is the Ser-85. Ser-143 contributes to the substrate binding site. Glu-179 acts as the Proton acceptor in catalysis. Residue 247 to 249 (KTG) coordinates substrate.

Belongs to the class-A beta-lactamase family.

The protein resides in the secreted. It carries out the reaction a beta-lactam + H2O = a substituted beta-amino acid. In terms of biological role, active on penicillins but not on cephalosporins. The sequence is that of Beta-lactamase (bla) from Amycolatopsis lactamdurans (Nocardia lactamdurans).